A 576-amino-acid polypeptide reads, in one-letter code: Sulfite reductase [NADPH] hemoprotein beta-component (576 aa).

The [4Fe-4S] cluster site is built by C435, C441, C480, and C484. C484 serves as a coordination point for siroheme.

The protein belongs to the nitrite and sulfite reductase 4Fe-4S domain family. In terms of assembly, alpha(8)-beta(8). The alpha component is a flavoprotein, the beta component is a hemoprotein. Siroheme serves as cofactor. [4Fe-4S] cluster is required as a cofactor.

The enzyme catalyses hydrogen sulfide + 3 NADP(+) + 3 H2O = sulfite + 3 NADPH + 4 H(+). The protein operates within sulfur metabolism; hydrogen sulfide biosynthesis; hydrogen sulfide from sulfite (NADPH route): step 1/1. Functionally, component of the sulfite reductase complex that catalyzes the 6-electron reduction of sulfite to sulfide. This is one of several activities required for the biosynthesis of L-cysteine from sulfate. The chain is Sulfite reductase [NADPH] hemoprotein beta-component from Yersinia pestis bv. Antiqua (strain Antiqua).